A 207-amino-acid chain; its full sequence is rRNA N(6)-adenosine-methyltransferase METTL5 (207 aa).

S-adenosyl-L-methionine contacts are provided by residues Gln-25, Thr-28, Gly-56, Cys-59, Val-61, Asp-78, and Asp-105 to Val-106.

The protein belongs to the methyltransferase superfamily. PrmA family.

Its subcellular location is the nucleus. The protein resides in the presynapse. It localises to the postsynapse. The catalysed reaction is adenosine(1832) in 18S rRNA + S-adenosyl-L-methionine = N(6)-methyladenosine(1832) in 18S rRNA + S-adenosyl-L-homocysteine + H(+). With respect to regulation, rRNA N6-adenosine-methyltransferase activity is inhibited by zinc. Functionally, catalytic subunit of a heterodimer with TRMT112, which specifically methylates the 6th position of adenine in position 1832 of 18S rRNA. N6-methylation of adenine(1832) in 18S rRNA resides in the decoding center of 18S rRNA and is required for translation and embryonic stem cells (ESCs) pluripotency and differentiation. The protein is rRNA N(6)-adenosine-methyltransferase METTL5 of Danio rerio (Zebrafish).